A 447-amino-acid polypeptide reads, in one-letter code: MKPVIALVGRPNVGKSTLFNRLTRSRDALVADIPGLTRDRHYGEGRVGDRPFIAIDTGGFEPVAKEGIVAEMAKQTRQAVVEADVVIFIVDGRLGLAPQDRVIADYLRKTGRRILLAVNKAEGMRYTAVASDFYELGLGDPAAISAAHGDGVNDLVAEALDLAFAERPELAEAADAHDHGTRIAIVGRPNVGKSTLVNALIGEERVIAFDMPGTTRDAIYVDFERNGKPYTLIDTAGLRKRGKVFEAIEKFSVVKTLQSIADANVVVLILDAQQDISDQDAHIAGFIVESGRALVIGVNKWDGLTGHARDRIKHDMERKLQFLSFANVHYISAKERTGIGALMKSVDAAYAAAMVKLPTPKLTRVLMEAVEYQQPRRAGVSRPKLRYAHQGGSNPPIVVIHGNALSNIPETYRRFLEGRFREAFQLKGTPLRIEFRTNKNPYAQSND.

EngA-type G domains are found at residues 3-167 (PVIA…FAER) and 181-354 (TRIA…AAAM). Residues 9–16 (GRPNVGKS), 56–60 (DTGGF), 119–122 (NKAE), 187–194 (GRPNVGKS), 234–238 (DTAGL), and 299–302 (NKWD) contribute to the GTP site. Residues 355–439 (VKLPTPKLTR…PLRIEFRTNK (85 aa)) form the KH-like domain.

Belongs to the TRAFAC class TrmE-Era-EngA-EngB-Septin-like GTPase superfamily. EngA (Der) GTPase family. In terms of assembly, associates with the 50S ribosomal subunit.

Functionally, GTPase that plays an essential role in the late steps of ribosome biogenesis. The sequence is that of GTPase Der from Ralstonia pickettii (strain 12J).